Here is a 213-residue protein sequence, read N- to C-terminus: Large ribosomal subunit protein uL3 (213 aa).

N5-methylglutamine is present on Gln-151.

Belongs to the universal ribosomal protein uL3 family. As to quaternary structure, part of the 50S ribosomal subunit. Forms a cluster with proteins L14 and L19. In terms of processing, methylated by PrmB.

Its function is as follows. One of the primary rRNA binding proteins, it binds directly near the 3'-end of the 23S rRNA, where it nucleates assembly of the 50S subunit. In Rhizobium etli (strain CIAT 652), this protein is Large ribosomal subunit protein uL3.